Here is a 397-residue protein sequence, read N- to C-terminus: Dual-specificity RNA methyltransferase RlmN (397 aa).

The active-site Proton acceptor is the Glu-116. Residues 122–366 enclose the Radical SAM core domain; that stretch reads EDDRGTLCIS…SPIRKTRGDD (245 aa). Residues Cys-129 and Cys-371 are joined by a disulfide bond. [4Fe-4S] cluster contacts are provided by Cys-136, Cys-140, and Cys-143. Residues 195–196, Ser-227, 249–251, and Asn-328 contribute to the S-adenosyl-L-methionine site; these read GE and SFH. Cys-371 serves as the catalytic S-methylcysteine intermediate.

This sequence belongs to the radical SAM superfamily. RlmN family. The cofactor is [4Fe-4S] cluster.

The protein resides in the cytoplasm. It catalyses the reaction adenosine(2503) in 23S rRNA + 2 reduced [2Fe-2S]-[ferredoxin] + 2 S-adenosyl-L-methionine = 2-methyladenosine(2503) in 23S rRNA + 5'-deoxyadenosine + L-methionine + 2 oxidized [2Fe-2S]-[ferredoxin] + S-adenosyl-L-homocysteine. The enzyme catalyses adenosine(37) in tRNA + 2 reduced [2Fe-2S]-[ferredoxin] + 2 S-adenosyl-L-methionine = 2-methyladenosine(37) in tRNA + 5'-deoxyadenosine + L-methionine + 2 oxidized [2Fe-2S]-[ferredoxin] + S-adenosyl-L-homocysteine. Its function is as follows. Specifically methylates position 2 of adenine 2503 in 23S rRNA and position 2 of adenine 37 in tRNAs. m2A2503 modification seems to play a crucial role in the proofreading step occurring at the peptidyl transferase center and thus would serve to optimize ribosomal fidelity. The protein is Dual-specificity RNA methyltransferase RlmN of Ruegeria sp. (strain TM1040) (Silicibacter sp.).